The primary structure comprises 262 residues: MAKGGKGPKGKKITLNVAKNCIKITFDGRKRLDLSKMGITTFPKCILRLSDIDELDLSRNMIRKIPDSIAKFQNLRWLDLHSNYIDKLPESIGQMTSLLFLNVSNNRLTTNGLPVELNQLKNIRTVNLGLNHLDSVPTTLGALKELHEVGLHDNLLTTIPASIAKLPKLKKLNIKRNPFPNADESEMFVDSIKRLENLYLVEEKDMCSSCLQRCQQARDKLNKIKSMAPSAPRKALFSNLVSPNSTAKDAQEEWRLRSPSTF.

LRR repeat units lie at residues 28–49, 51–72, 74–95, 97–118, 122–144, 145–167, and 168–189; these read GRKR…ILRL, DIDE…IAKF, NLRW…IGQM, SLLF…VELN, NIRT…GALK, ELHE…AKLP, and KLKK…EMFV.

Exclusively expressed in spermatocytes and roud spermatids within seminiferous tubules during spermatogenesis.

It localises to the cytoplasm. Its function is as follows. May be involved in the regulation of spermatogenesis and sperm maturation. This chain is Leucine-rich repeat-containing protein 18 (Lrrc18), found in Mus musculus (Mouse).